A 698-amino-acid chain; its full sequence is Serine/alanine racemase (698 aa).

At 1 to 10 (MKNKGIDQFR) the chain is on the cytoplasmic side. Residues 11–31 (VIAAMMVVAIHCLPLHYLWPE) form a helical membrane-spanning segment. The Extracellular portion of the chain corresponds to 32 to 42 (GDILITLTIFR). A helical transmembrane segment spans residues 43 to 63 (VAVPFFFMISGYYVFAELAVA). Residues 64–81 (NSYPSRQRVFNFIKKQLK) are Cytoplasmic-facing. Residues 82-102 (VYLLATLMFLPLALYSQTIGF) form a helical membrane-spanning segment. Over 103–121 (DLPVGTLVQVLLVNGILYH) the chain is Extracellular. The chain crosses the membrane as a helical span at residues 122–142 (LWYFPALITGSLLLTSLLIHV). The Cytoplasmic segment spans residues 143–147 (SFKKV). A helical transmembrane segment spans residues 148–168 (FWLAAGLYLIGLGGDSWFGLI). At 169–183 (QQTPIEPFYTAVFHL) the chain is on the extracellular side. A helical transmembrane segment spans residues 184–204 (LDGTRNGIFFTPLFLCLGVLV). Residues 205-216 (RKQSEKRSLSKT) lie on the Cytoplasmic side of the membrane. A helical transmembrane segment spans residues 217 to 237 (ALFFLISLIGLLIESAYLHGF). Residues 238 to 244 (SIPKHDS) are Extracellular-facing. Residues 245-265 (MYLFLPVVLFFLFPLILRWHP) traverse the membrane as a helical segment. Over 266 to 274 (HRTWKHPGQ) the chain is Cytoplasmic. A helical membrane pass occupies residues 275–295 (LSLWLYLLHPYTIAGTHFLSQ). At 296-301 (KISILQ) the chain is on the extracellular side. A helical transmembrane segment spans residues 302–322 (NNLINYLVVLILTIGFICLFL). Topologically, residues 323–698 (RQKHSWFRHK…IGPRVSARIK (376 aa)) are cytoplasmic. Positions 332-698 (KQTTPVKRAV…IGPRVSARIK (367 aa)) are racemase. The Proton acceptor role is filled by K371. At K371 the chain carries N6-(pyridoxal phosphate)lysine. R465 contributes to the substrate binding site. Catalysis depends on Y597, which acts as the Proton acceptor. M646 provides a ligand contact to substrate.

This sequence in the N-terminal section; belongs to the acyltransferase 3 family. In the C-terminal section; belongs to the alanine racemase family. In terms of assembly, homodimer. Pyridoxal 5'-phosphate serves as cofactor.

Its subcellular location is the cell membrane. The catalysed reaction is L-alanine = D-alanine. It carries out the reaction L-serine = D-serine. Its pathway is amino-acid biosynthesis; D-alanine biosynthesis; D-alanine from L-alanine: step 1/1. Functionally, catalyzes the interconversion of L-serine and D-serine, and L-alanine and D-alanine. L-alanine is racemized at a rate that is 14% of that of L-serine. Together with VanC/VanC1 and VanXYC, required for vancomycin resistance in E.gallinarum strain BM4174. The sequence is that of Serine/alanine racemase from Enterococcus gallinarum.